The primary structure comprises 74 residues: M-myrmeciitoxin-Mb1a (74 aa).

The N-terminal stretch at 1–26 is a signal peptide; it reads MKLSCLLLTLAIIVVLTIVHAPNVEA. The propeptide occupies 27 to 50; that stretch reads KALADPESDAVGFADAVGEADPNA. Residue Gln73 is modified to Glutamine amide.

The protein belongs to the formicidae venom precursor-01 superfamily. Ant pilosulin family. Expressed by the venom gland.

Its subcellular location is the secreted. Its function is as follows. Shows moderate activity against E.coli and S.aureus (MIC&lt;25 uM), slight activity against B.subtilis (MIC&lt;50 uM), and no activity against L.garvieae, P.aeruginosa, C.albicans, and S.cerevisiae. Has no hemolytic nor cytolytic activity. Causes an IgE-independent histamine release. The sequence is that of M-myrmeciitoxin-Mb1a from Myrmecia banksi (Jack jumper ant).